The following is a 764-amino-acid chain: Myotubularin-related protein 10-B (764 aa).

A Myotubularin phosphatase domain is found at 208–649; that stretch reads FESYSDWDRE…THIQIWKLCY (442 aa).

Belongs to the protein-tyrosine phosphatase family. Non-receptor class myotubularin subfamily.

The polypeptide is Myotubularin-related protein 10-B (mtmr10-b) (Xenopus laevis (African clawed frog)).